The chain runs to 915 residues: Phototropin-2 (915 aa).

Positions 1 to 10 (MERPRAPPSP) are enriched in pro residues. Disordered stretches follow at residues 1–62 (MERP…EFQD) and 84–118 (DDGI…GAFP). Phosphoserine occurs at positions 9 and 22. Over residues 27-43 (NPSSGKETHGSTSSSSK) the composition is skewed to polar residues. A compositionally biased stretch (basic and acidic residues) spans 93 to 107 (SEVERSKNMSRRSSE). A PAS 1 domain is found at 120 to 193 (VSQELKTALS…AKIRDCVKNG (74 aa)). Residue Ser121 is modified to Phosphoserine. Asn169 is an FMN binding site. At Cys170 the chain carries S-4a-FMN cysteine. Residues Arg171, Gln174, Arg187, Asn202, Asn212, Gln233, and Lys238 each coordinate FMN. The 55-residue stretch at 194–248 (KSYCGRLLNYKKDGTPFWNLLTVTPIKDDQGNTIKFIGMQVEVSKYTEGVNDKAL) folds into the PAC 1 domain. The disordered stretch occupies residues 281 to 344 (HRKSQVQESV…KSSNNRHEDL (64 aa)). 2 stretches are compositionally biased toward polar residues: residues 286–310 (VQES…GRQT) and 325–337 (RVST…LKSS). At Ser364 the chain carries Phosphoserine. Residues 376-449 (QGIDLATTLE…QKIRDAIRDQ (74 aa)) form the PAS 2 domain. Asn425 provides a ligand contact to FMN. At Cys426 the chain carries S-4a-FMN cysteine. FMN contacts are provided by Arg427, Gln430, Arg443, Asn458, Asn468, Phe470, and Gln489. A PAC 2 domain is found at 450–504 (REITVQLINYTKSGKKFWNLFHLQPMRDQKGELQYFIGVQLDGSDHVEPLQNRLS). In terms of domain architecture, Protein kinase spans 577-864 (FKPIKPLGSG…ANEIKQHAFF (288 aa)). ATP-binding positions include 583-591 (LGSGDTGSV) and Lys606. The active-site Proton acceptor is Asp702. An activation loop region spans residues 720-774 (DFDLSFMTTCTPQLIIPAAPSKRRRSKSQPLPTFVAEPSTQSNSFVGTEEYIAPE).

The protein belongs to the protein kinase superfamily. AGC Ser/Thr protein kinase family. In terms of assembly, homodimer. Interacts with PKS1, PKS2, RPT3 and PHOT1. Associates with CBC1 and CBC2. Binds to BHP. FMN serves as cofactor. Post-translationally, autophosphorylated in response to blue light irradiation. In terms of processing, 2 molecules of FMN bind covalently to cysteines after exposure to blue light and are reversed in the dark. As to expression, expressed in leaves, stems and flowers, and to a lower extent in roots. Present in guard cells (at protein level).

It localises to the cell membrane. It carries out the reaction L-seryl-[protein] + ATP = O-phospho-L-seryl-[protein] + ADP + H(+). The catalysed reaction is L-threonyl-[protein] + ATP = O-phospho-L-threonyl-[protein] + ADP + H(+). With respect to regulation, autophosphorylation is inhibited by staurosporine, but not by tyrphostin 9, sphingosine, GW5074 and BML-265. Its function is as follows. Protein kinase that acts as a blue light photoreceptor in a signal-transduction pathway for photo-induced movements. Triggers the phosphorylation of AHA1 and AHA2 C-terminal penultimate Thr in guard cells to activate them and induce stomatal opening in response to blue light (BL). Also phosphorylates BLUS1, a kinase involved in stomatal opening. Mediates calcium spiking of extra- and intracellular origins in response to blue light. Involved in hypocotyl phototropism. Contributes to the chloroplast accumulation in low blue light and mediates their translocation (avoidance response) at high fluence. Regulates stomata opening and photomorphogenesis response of leaf tissue. Not involved in hypocotyl elongation inhibition, anthocyanin accumulation or cotyledon opening. The chain is Phototropin-2 from Arabidopsis thaliana (Mouse-ear cress).